A 205-amino-acid chain; its full sequence is Small ribosomal subunit protein uS4 (205 aa).

Residues 94–157 (SRLDAVVYRA…RNLALVLEAL (64 aa)) enclose the S4 RNA-binding domain.

It belongs to the universal ribosomal protein uS4 family. In terms of assembly, part of the 30S ribosomal subunit. Contacts protein S5. The interaction surface between S4 and S5 is involved in control of translational fidelity.

One of the primary rRNA binding proteins, it binds directly to 16S rRNA where it nucleates assembly of the body of the 30S subunit. In terms of biological role, with S5 and S12 plays an important role in translational accuracy. This Hyphomonas neptunium (strain ATCC 15444) protein is Small ribosomal subunit protein uS4.